The following is a 126-amino-acid chain: Translation initiation factor 5A (126 aa).

Lysine 36 carries the post-translational modification Hypusine.

It belongs to the eIF-5A family.

It localises to the cytoplasm. In terms of biological role, functions by promoting the formation of the first peptide bond. This is Translation initiation factor 5A from Haloarcula marismortui (strain ATCC 43049 / DSM 3752 / JCM 8966 / VKM B-1809) (Halobacterium marismortui).